The primary structure comprises 348 residues: MSDRLTLLRPDDWHIHLRDGAALANTVGDAARTFGRAIVMPNLVPPVRNAAEADAYRQRILAARPAASRFEPLMVLYLTDRTSAEEIRTAKASGFVHAAKLYPAGATTNSDSGVTRIDNVFAALEAMAEVGMPLLVHGEVTRAEVDVFDREKQFIDEHLRRVVERFPTLKVVFEHITTGDAAQFVREAPANVGATITAHHLLYNRNHMLVGGIRPHFYCLPILKRNTHQEALLDAAVSGNPKFFLGTDSAPHARHAKEAACGCAGCYTAYAAIELYAEAFEQRNALDKLEGFASLHGPDFYGLPRNTDRITLVREQWQAPASLPFGDFDVVPLRAGETLRWKLLEAEA.

Histidine 14 and histidine 16 together coordinate Zn(2+). Residues 16–18 (HLR) and asparagine 42 contribute to the substrate site. Zn(2+)-binding residues include lysine 100, histidine 137, and histidine 175. Residue lysine 100 is modified to N6-carboxylysine. Residue histidine 137 coordinates substrate. Leucine 220 is a binding site for substrate. Residue aspartate 248 coordinates Zn(2+). Residue aspartate 248 is part of the active site. 2 residues coordinate substrate: histidine 252 and alanine 264.

It belongs to the metallo-dependent hydrolases superfamily. DHOase family. Class II DHOase subfamily. Homodimer. The cofactor is Zn(2+).

It catalyses the reaction (S)-dihydroorotate + H2O = N-carbamoyl-L-aspartate + H(+). The protein operates within pyrimidine metabolism; UMP biosynthesis via de novo pathway; (S)-dihydroorotate from bicarbonate: step 3/3. Functionally, catalyzes the reversible cyclization of carbamoyl aspartate to dihydroorotate. The chain is Dihydroorotase from Pseudomonas paraeruginosa (strain DSM 24068 / PA7) (Pseudomonas aeruginosa (strain PA7)).